The following is a 154-amino-acid chain: Probable prefoldin subunit 5 (154 aa).

It belongs to the prefoldin subunit alpha family. In terms of assembly, heterohexamer of two PFD-alpha type and four PFD-beta type subunits.

Its function is as follows. Binds specifically to cytosolic chaperonin (c-CPN) and transfers target proteins to it. Binds to nascent polypeptide chain and promotes folding in an environment in which there are many competing pathways for nonnative proteins. This is Probable prefoldin subunit 5 from Caenorhabditis briggsae.